Reading from the N-terminus, the 399-residue chain is Insertion element IS900 uncharacterized 42 kDa protein (399 aa).

This sequence belongs to the transposase IS1111A/IS1328/IS1533 family.

The polypeptide is Insertion element IS900 uncharacterized 42 kDa protein (Mycobacterium paratuberculosis).